Reading from the N-terminus, the 88-residue chain is ATP synthase epsilon chain (88 aa).

This sequence belongs to the ATPase epsilon chain family. F-type ATPases have 2 components, CF(1) - the catalytic core - and CF(0) - the membrane proton channel. CF(1) has five subunits: alpha(3), beta(3), gamma(1), delta(1), epsilon(1). CF(0) has three main subunits: a, b and c.

It is found in the cell inner membrane. Functionally, produces ATP from ADP in the presence of a proton gradient across the membrane. This chain is ATP synthase epsilon chain (atpC), found in Chlorobaculum tepidum (strain ATCC 49652 / DSM 12025 / NBRC 103806 / TLS) (Chlorobium tepidum).